Consider the following 291-residue polypeptide: Bis(5'-nucleosyl)-tetraphosphatase, symmetrical (291 aa).

This sequence belongs to the Ap4A hydrolase family.

The enzyme catalyses P(1),P(4)-bis(5'-adenosyl) tetraphosphate + H2O = 2 ADP + 2 H(+). Its function is as follows. Hydrolyzes diadenosine 5',5'''-P1,P4-tetraphosphate to yield ADP. This chain is Bis(5'-nucleosyl)-tetraphosphatase, symmetrical, found in Pseudomonas syringae pv. syringae (strain B728a).